The following is a 474-amino-acid chain: tRNA-2-methylthio-N(6)-dimethylallyladenosine synthase (474 aa).

The 118-residue stretch at 3–120 folds into the MTTase N-terminal domain; the sequence is KKLHIKTWGC…LPEMINHVQG (118 aa). The [4Fe-4S] cluster site is built by cysteine 12, cysteine 49, cysteine 83, cysteine 157, cysteine 161, and cysteine 164. The Radical SAM core domain occupies 143 to 375; that stretch reads RAEGPTAFVS…QQRISQQAME (233 aa). The TRAM domain occupies 378–441; that stretch reads RKMVGTVQRV…ASSLRGILLR (64 aa).

It belongs to the methylthiotransferase family. MiaB subfamily. Monomer. The cofactor is [4Fe-4S] cluster.

The protein resides in the cytoplasm. It catalyses the reaction N(6)-dimethylallyladenosine(37) in tRNA + (sulfur carrier)-SH + AH2 + 2 S-adenosyl-L-methionine = 2-methylsulfanyl-N(6)-dimethylallyladenosine(37) in tRNA + (sulfur carrier)-H + 5'-deoxyadenosine + L-methionine + A + S-adenosyl-L-homocysteine + 2 H(+). Its function is as follows. Catalyzes the methylthiolation of N6-(dimethylallyl)adenosine (i(6)A), leading to the formation of 2-methylthio-N6-(dimethylallyl)adenosine (ms(2)i(6)A) at position 37 in tRNAs that read codons beginning with uridine. This Yersinia pseudotuberculosis serotype O:1b (strain IP 31758) protein is tRNA-2-methylthio-N(6)-dimethylallyladenosine synthase.